A 571-amino-acid polypeptide reads, in one-letter code: Isocitrate dehydrogenase kinase/phosphatase (571 aa).

ATP-binding positions include 318-324 (APGVRGM) and Lys-339. Asp-374 is a catalytic residue.

Belongs to the AceK family.

It is found in the cytoplasm. It catalyses the reaction L-seryl-[isocitrate dehydrogenase] + ATP = O-phospho-L-seryl-[isocitrate dehydrogenase] + ADP + H(+). In terms of biological role, bifunctional enzyme which can phosphorylate or dephosphorylate isocitrate dehydrogenase (IDH) on a specific serine residue. This is a regulatory mechanism which enables bacteria to bypass the Krebs cycle via the glyoxylate shunt in response to the source of carbon. When bacteria are grown on glucose, IDH is fully active and unphosphorylated, but when grown on acetate or ethanol, the activity of IDH declines drastically concomitant with its phosphorylation. This is Isocitrate dehydrogenase kinase/phosphatase from Pseudomonas putida (strain ATCC 700007 / DSM 6899 / JCM 31910 / BCRC 17059 / LMG 24140 / F1).